A 135-amino-acid polypeptide reads, in one-letter code: Large ribosomal subunit protein eL32 (135 aa).

Belongs to the eukaryotic ribosomal protein eL32 family.

The chain is Large ribosomal subunit protein eL32 from Methanococcus maripaludis (strain C7 / ATCC BAA-1331).